Reading from the N-terminus, the 253-residue chain is Phycoerythrobilin:ferredoxin oxidoreductase (253 aa).

The protein belongs to the HY2 family.

It carries out the reaction (3Z)-phycoerythrobilin + oxidized 2[4Fe-4S]-[ferredoxin] = 15,16-dihydrobiliverdin + reduced 2[4Fe-4S]-[ferredoxin] + 2 H(+). Catalyzes the two-electron reduction of the C2 and C3(1) diene system of 15,16-dihydrobiliverdin. This is Phycoerythrobilin:ferredoxin oxidoreductase from Prochlorococcus marinus (strain MIT 9312).